We begin with the raw amino-acid sequence, 248 residues long: Enolase-phosphatase E1 (248 aa).

Residues Asp-14 and Glu-16 each coordinate Mg(2+). Substrate-binding positions include 145–146 (SS) and Lys-179. Residue Asp-204 participates in Mg(2+) binding.

It belongs to the HAD-like hydrolase superfamily. MasA/MtnC family. Monomer. The cofactor is Mg(2+).

The protein resides in the cytoplasm. It is found in the nucleus. It carries out the reaction 5-methylsulfanyl-2,3-dioxopentyl phosphate + H2O = 1,2-dihydroxy-5-(methylsulfanyl)pent-1-en-3-one + phosphate. Its pathway is amino-acid biosynthesis; L-methionine biosynthesis via salvage pathway; L-methionine from S-methyl-5-thio-alpha-D-ribose 1-phosphate: step 3/6. The protein operates within amino-acid biosynthesis; L-methionine biosynthesis via salvage pathway; L-methionine from S-methyl-5-thio-alpha-D-ribose 1-phosphate: step 4/6. Bifunctional enzyme that catalyzes the enolization of 2,3-diketo-5-methylthiopentyl-1-phosphate (DK-MTP-1-P) into the intermediate 2-hydroxy-3-keto-5-methylthiopentenyl-1-phosphate (HK-MTPenyl-1-P), which is then dephosphorylated to form the acireductone 1,2-dihydroxy-3-keto-5-methylthiopentene (DHK-MTPene). This is Enolase-phosphatase E1 from Caenorhabditis elegans.